The primary structure comprises 1161 residues: Nardilysin (1161 aa).

An N-terminal signal peptide occupies residues methionine 1–arginine 18. Disordered stretches follow at residues lysine 42–serine 105 and valine 130–threonine 218. Residues serine 85, serine 91, and serine 93 each carry the phosphoserine modification. Residues threonine 138–glutamate 209 show a composition bias toward acidic residues. A Zn(2+)-binding site is contributed by histidine 244. Glutamate 247 acts as the Proton acceptor in catalysis. Residues histidine 248 and glutamate 325 each coordinate Zn(2+).

This sequence belongs to the peptidase M16 family. Interacts with BACE1 and NRG1. It depends on Zn(2+) as a cofactor. Testis, and in a lower level in brain, heart and adrenal glands.

It is found in the mitochondrion. The protein resides in the cell projection. It localises to the dendrite. It carries out the reaction Hydrolysis of polypeptides, preferably at -Xaa-|-Arg-Lys-, and less commonly at -Arg-|-Arg-Xaa-, in which Xaa is not Arg or Lys.. In terms of biological role, cleaves peptide substrates on the N-terminus of arginine residues in dibasic pairs. Is a critical activator of BACE1- and ADAM17-mediated pro-neuregulin ectodomain shedding, involved in the positive regulation of axonal maturation and myelination. Required for proper functioning of 2-oxoglutarate dehydrogenase (OGDH). The sequence is that of Nardilysin from Rattus norvegicus (Rat).